A 568-amino-acid polypeptide reads, in one-letter code: Small ribosomal subunit protein bS1 (568 aa).

S1 motif domains follow at residues 39 to 100 (KTVV…LSRE), 118 to 184 (GEFV…VSRR), 205 to 273 (GMIL…LGIK), 290 to 360 (GKKM…LSIK), 377 to 447 (GTII…LGIK), and 464 to 533 (GTIV…LSVK).

This sequence belongs to the bacterial ribosomal protein bS1 family.

In terms of biological role, binds mRNA; thus facilitating recognition of the initiation point. It is needed to translate mRNA with a short Shine-Dalgarno (SD) purine-rich sequence. The chain is Small ribosomal subunit protein bS1 (rpsA) from Rickettsia typhi (strain ATCC VR-144 / Wilmington).